Here is a 143-residue protein sequence, read N- to C-terminus: Large ribosomal subunit protein uL16 (143 aa).

The protein belongs to the universal ribosomal protein uL16 family. In terms of assembly, part of the 50S ribosomal subunit.

Binds 23S rRNA and is also seen to make contacts with the A and possibly P site tRNAs. In Tropheryma whipplei (strain TW08/27) (Whipple's bacillus), this protein is Large ribosomal subunit protein uL16.